An 874-amino-acid chain; its full sequence is Isopimaradiene synthase, chloroplastic (874 aa).

Over residues 1–12 (MALPSSSLSSRI) the composition is skewed to polar residues. Residues 1–20 (MALPSSSLSSRIPTGPHPLT) form a disordered region. The transit peptide at 1-37 (MALPSSSLSSRIPTGPHPLTHTQCIPHFSTTINAGIS) directs the protein to the chloroplast. Residues Asp407, Asp409, Asp626, Asp630, Asn770, and Glu778 each contribute to the Mg(2+) site. The short motif at 407 to 410 (DIDD) is the DXDD motif element. The DDXXD motif signature appears at 626–630 (DDLYD).

This sequence belongs to the terpene synthase family. Tpsd subfamily. Mg(2+) is required as a cofactor. Requires Mn(2+) as cofactor.

Its subcellular location is the plastid. The protein resides in the chloroplast. It catalyses the reaction (+)-copalyl diphosphate = isopimara-8(14),15-diene + diphosphate. It participates in terpene metabolism; oleoresin biosynthesis. Its function is as follows. Terpene synthase (TPS) involved in the biosynthesis of diterpene natural products included in conifer oleoresin secretions and volatile emissions; these compounds contribute to biotic and abiotic stress defense against herbivores and pathogens. Catalyzes the conversion of (+)-copalyl diphosphate ((+)-CPP) to isopimaradiene. This Picea sitchensis (Sitka spruce) protein is Isopimaradiene synthase, chloroplastic.